The chain runs to 164 residues: V-type proton ATPase 16 kDa proteolipid subunit (164 aa).

Over 1–9 the chain is Lumenal; it reads MASFSGDET. A helical membrane pass occupies residues 10 to 32; it reads APFFGFLGAAAALVFSCMGAAYG. The Cytoplasmic segment spans residues 33 to 54; sequence TAKSGVGVASMGVMRPELVMKS. The helical transmembrane segment at 55–75 threads the bilayer; the sequence is IVPVVMAGVLGIYGLIIAVII. Residues 76–94 are Lumenal-facing; the sequence is STGINPKAKSYYLFDGYAH. A helical transmembrane segment spans residues 95–116; that stretch reads LSSGLACGLAGLSAGMAIGIVG. The Cytoplasmic portion of the chain corresponds to 117–128; the sequence is DAGVRANAQQPK. Residues 129–154 traverse the membrane as a helical segment; it reads LFVGMILILIFAEALALYGLIVGIIL. Topologically, residues 155-164 are lumenal; it reads SSRAGQSRAD.

It belongs to the V-ATPase proteolipid subunit family. V-ATPase is a heteromultimeric enzyme composed of a peripheral catalytic V1 complex (main components: subunits A, B, C, D, E, and F) attached to an integral membrane V0 proton pore complex (main component: the proteolipid protein; which is present as a hexamer that forms the proton-conducting pore).

Its subcellular location is the vacuole membrane. Functionally, proton-conducting pore forming subunit of the membrane integral V0 complex of vacuolar ATPase. V-ATPase is responsible for acidifying a variety of intracellular compartments in eukaryotic cells. The sequence is that of V-type proton ATPase 16 kDa proteolipid subunit from Vigna radiata var. radiata (Mung bean).